The sequence spans 490 residues: UDP-N-acetylmuramate--L-alanine ligase (490 aa).

130–136 is an ATP binding site; that stretch reads GTHGKTT.

Belongs to the MurCDEF family.

The protein localises to the cytoplasm. The catalysed reaction is UDP-N-acetyl-alpha-D-muramate + L-alanine + ATP = UDP-N-acetyl-alpha-D-muramoyl-L-alanine + ADP + phosphate + H(+). It participates in cell wall biogenesis; peptidoglycan biosynthesis. In terms of biological role, cell wall formation. The polypeptide is UDP-N-acetylmuramate--L-alanine ligase (Idiomarina loihiensis (strain ATCC BAA-735 / DSM 15497 / L2-TR)).